Reading from the N-terminus, the 542-residue chain is MSKDIKFSSDARTAMMRGIDILADTVKTTLGPKGRNVVLEKSYGSPLITNDGVTIAKEIELEDHFENMGAKLVSEVASKTNDIAGDGTTTATVLTQAIVREGLKNVTAGANPVGIRRGIELAAETAVASIKEMAIPVHDKSAIAQVATVSSRSEKVGEYISDAMERVGSDGVITIEESKGMQTELDVVEGMQFDRGYLSQYMVSNTEKMVAELDNPYILITDKKISNIQEILPLLEQILKTNRPLLIVADDVDGEALPTLVLNKIKGVFNVVAVKAPGFGDRRKAQLEDLAILTGGTVITEELGLDLKDATLEALGQAAKATVDKDHTTIVEGAGSADAISDRVAIIKAQIEKTTSDFDREKLQERLAKLAGGVAVVKVGAATETELKAMKLLIEDALNATRAAVEEGIVSGGGTALVNAIAALDKLSEEGDIQTGINIVRRALEEPVRQIAANAGYEGSVIIDKLRSEEVGTGFNAATGQWVNMIEEGIVDPAKVTRSALQNAASVAGLILTTEAVVANKPEPAAPAMPPMDPSMGMGGMM.

ATP-binding positions include 29 to 32 (TLGP), 86 to 90 (DGTTT), Gly413, 476 to 478 (NAA), and Asp492.

The protein belongs to the chaperonin (HSP60) family. As to quaternary structure, forms a cylinder of 14 subunits composed of two heptameric rings stacked back-to-back. Interacts with the co-chaperonin GroES.

The protein localises to the cytoplasm. The enzyme catalyses ATP + H2O + a folded polypeptide = ADP + phosphate + an unfolded polypeptide.. Functionally, together with its co-chaperonin GroES, plays an essential role in assisting protein folding. The GroEL-GroES system forms a nano-cage that allows encapsulation of the non-native substrate proteins and provides a physical environment optimized to promote and accelerate protein folding. The protein is Chaperonin GroEL of Lactococcus lactis subsp. lactis (strain IL1403) (Streptococcus lactis).